We begin with the raw amino-acid sequence, 382 residues long: Norsolorinic acid reductase B (382 aa).

Asp-64 provides a ligand contact to NADP(+). Tyr-69 functions as the Proton donor in the catalytic mechanism. His-143 contacts substrate. NADP(+) is bound by residues 173–174, Gln-199, 228–238, and 302–310; these read SD, GVLNQGRFRTE, and RKVDHLTGV.

It belongs to the aldo/keto reductase family. Aldo/keto reductase 2 subfamily.

It participates in mycotoxin biosynthesis; aflatoxin biosynthesis. Functionally, norsolorinic acid reductase; part of the gene cluster that mediates the biosynthesis of aflatoxins, a group of polyketide-derived furanocoumarins, and part of the most toxic and carcinogenic compounds among the known mycotoxins. The four major aflatoxins produced by A.parasiticus are aflatoxin B1 (AFB1), aflatoxin B2 (AFB2), aflatoxin G1 (AFG1) and aflatoxin G2 (AFG2). Within the aflatoxin pathway, the norsolorinic acid reductase aflE may play a role in the conversion of norsolorinic acid (NOR) to averantin (AVN). The biosynthesis of aflatoxins begins with the norsolorinic acid synthase aflC that combines a hexanoyl starter unit produced by the fatty acid synthase aflA/aflB and 7 malonyl-CoA extender units to synthesize the precursor NOR. The second step is the conversion of NOR to averantin and requires the norsolorinic acid ketoreductase aflD, which catalyzes the dehydration of norsolorinic acid to form (1'S)-averantin. The norsolorinic acid reductases aflE and aflF may also play a role in the conversion of NOR to AVN. The cytochrome P450 monooxygenase aflG then catalyzes the hydroxylation of AVN to 5'hydroxyaverantin (HAVN). The next step is performed by the 5'-hydroxyaverantin dehydrogenase aflH that transforms HAVN to 5'-oxoaverantin (OAVN) which is further converted to averufin (AVF) by aflK that plays a dual role in the pathway, as a 5'-oxoaverantin cyclase that mediates conversion of 5'-oxoaverantin, as well as a versicolorin B synthase in a later step in the pathway. The averufin oxidase aflI catalyzes the conversion of AVF to versiconal hemiacetal acetate (VHA). VHA is then the substrate for the versiconal hemiacetal acetate esterase aflJ to yield versiconal (VAL). Versicolorin B synthase aflK then converts VAL to versicolorin B (VERB) by closing the bisfuran ring of aflatoxin which is required for DNA-binding, thus giving to aflatoxin its activity as a mutagen. Then, the activity of the versicolorin B desaturase aflL leads to versicolorin A (VERA). A branch point starts from VERB since it can also be converted to dihydrodemethylsterigmatocystin (DMDHST), probably also by aflL, VERA being a precursor for aflatoxins B1 and G1, and DMDHST for aflatoxins B2 and G2. Next, the versicolorin reductase aflM and the cytochrome P450 monooxygenase aflN are involved in conversion of VERA to demethylsterigmatocystin (DMST). AflX and aflY seem also involved in this step, through probable aflX-mediated epoxide ring-opening step following versicolorin A oxidation and aflY-mediated Baeyer-Villiger oxidation required for the formation of the xanthone ring. The methyltransferase aflO then leads to the modification of DMST to sterigmatocystin (ST), and of DMDHST to dihydrosterigmatocystin (DHST). Both ST and DHST are then substrates of the O-methyltransferase aflP to yield O-methylsterigmatocystin (OMST) and dihydro-O-methylsterigmatocystin (DHOMST), respectively. Finally OMST is converted to aflatoxins B1 and G1, and DHOMST to aflatoxins B2 and G2, via the action of several enzymes including O-methylsterigmatocystin oxidoreductase aflQ, the cytochrome P450 monooxygenase aflU, but also the NADH-dependent flavin oxidoreductase nadA which is specifically required for the synthesis of AFG1. This is Norsolorinic acid reductase B from Aspergillus parasiticus (strain ATCC 56775 / NRRL 5862 / SRRC 143 / SU-1).